A 218-amino-acid polypeptide reads, in one-letter code: Superoxide dismutase [Mn] 2, mitochondrial (218 aa).

A mitochondrion-targeting transit peptide spans 1–24 (MLQSTARTASKLVQPVAGVLAVRS). Positions 50, 98, 179, and 183 each coordinate Mn(2+).

It belongs to the iron/manganese superoxide dismutase family. In terms of assembly, homotetramer. Mn(2+) is required as a cofactor. Expressed in pharynx and rectum. Upon thermal stress, expressed in vulva, body wall muscles and hypodermis.

The protein resides in the mitochondrion. It carries out the reaction 2 superoxide + 2 H(+) = H2O2 + O2. Its function is as follows. Destroys superoxide anion radicals which are normally produced within the cells and which are toxic to biological systems. This Caenorhabditis elegans protein is Superoxide dismutase [Mn] 2, mitochondrial (sod-3).